Reading from the N-terminus, the 258-residue chain is Acetylglutamate kinase (258 aa).

Residues 41–42, arginine 63, and asparagine 156 each bind substrate; that span reads GG.

Belongs to the acetylglutamate kinase family. ArgB subfamily. In terms of assembly, homodimer.

Its subcellular location is the cytoplasm. It carries out the reaction N-acetyl-L-glutamate + ATP = N-acetyl-L-glutamyl 5-phosphate + ADP. It participates in amino-acid biosynthesis; L-arginine biosynthesis; N(2)-acetyl-L-ornithine from L-glutamate: step 2/4. Its function is as follows. Catalyzes the ATP-dependent phosphorylation of N-acetyl-L-glutamate. The polypeptide is Acetylglutamate kinase (Geobacillus stearothermophilus (Bacillus stearothermophilus)).